Consider the following 546-residue polypeptide: Calcitonin receptor-like protein 1 (546 aa).

Topologically, residues methionine 1–glutamate 171 are cytoplasmic. Residues phenylalanine 172 to phenylalanine 192 form a helical membrane-spanning segment. The Extracellular portion of the chain corresponds to arginine 193 to histidine 205. The chain crosses the membrane as a helical span at residues leucine 206–phenylalanine 226. The Cytoplasmic segment spans residues threonine 227–glycine 251. A helical membrane pass occupies residues methionine 252–isoleucine 272. Residues tyrosine 273–tyrosine 292 lie on the Extracellular side of the membrane. The chain crosses the membrane as a helical span at residues phenylalanine 293–isoleucine 313. Over lysine 314–tryptophan 333 the chain is Cytoplasmic. A helical membrane pass occupies residues isoleucine 334–isoleucine 354. Topologically, residues arginine 355–lysine 377 are extracellular. N-linked (GlcNAc...) asparagine glycosylation is found at asparagine 365 and asparagine 366. A helical transmembrane segment spans residues alanine 378–alanine 398. Residues proline 399–asparagine 403 lie on the Cytoplasmic side of the membrane. A helical membrane pass occupies residues isoleucine 404 to methionine 424. The Extracellular segment spans residues valine 425–proline 546. 2 N-linked (GlcNAc...) asparagine glycosylation sites follow: asparagine 472 and asparagine 476. Positions asparagine 472 to proline 546 are disordered. The span at glycine 473 to alanine 485 shows a compositional bias: polar residues. The segment covering lysine 500 to asparagine 520 has biased composition (basic and acidic residues). N-linked (GlcNAc...) asparagine glycosylation occurs at asparagine 540.

This sequence belongs to the G-protein coupled receptor 2 family. In terms of tissue distribution, expression was observed in the mechanosensory neuron pairs PLM, ALM, FLP, OLQD, and OLQV, the chemosensory neurons PHA, PHB, RMEV, the ring motor neurons RMED, and the pharyngeal interneuron pair I1. Expression in sensory neurons PHA, PQR and URY are responsible for mate searching behavior. Expressed in AIY, RIM, RIA, and other neurons.

It is found in the cell membrane. G-protein coupled receptor for PDF neuropeptides. Plays a role in responses to environmental signals, including chemicals and touch, and in modulating locomotory behaviors. Capable of transducing signals via an adenylate cyclase acy-1 cAMP-dependent pathway. Required to regulate the sex-specific expression of TGFbeta-like daf-7 in the ASJ chemosensory neurons, perhaps acting via acy-1. Involved in modulating mate searching behavior independent of nutritional status. In the presence of food, plays a role in initiating and extending exploratory roaming behavior, perhaps acting in AIY, RIM, RIA, and other neurons, in opposition to 5-hydroxytryptamine (serotonin) signaling. Involved in mediating arousal from the sleep-like state called lethargus, which occurs during molting between larval and adult stages, in part by regulating touch sensitivity. May play a role in circadian rhythms of locomotor activity. In terms of biological role, G-protein coupled receptor which is activated by neuropeptides PDF-1 and PDF-2. Probably acts through the G-alpha(s) type of G proteins to elevate cAMP levels. Its function is as follows. G-protein coupled receptor which is activated by neuropeptides PDF-1 and PDF-2; however, activation is lower compared to isoforms a and b. Probably inhibits cAMP levels through the G-alpha(i/o) type of G proteins. The sequence is that of Calcitonin receptor-like protein 1 (pdfr-1) from Caenorhabditis elegans.